Consider the following 741-residue polypeptide: Cytosolic phospholipase A2 (741 aa).

Residues 1–116 form the C2 domain; sequence MSNIIVEHQY…KVAQMEHVTL (116 aa). The phospholipid binding stretch occupies residues 1 to 172; that stretch reads MSNIIVEHQY…IKKLLKMENP (172 aa). Asp34, Thr35, Asp37, Asn59, Asp87, Ala88, and Asn89 together coordinate Ca(2+). In terms of domain architecture, PLA2c spans 132–729; that stretch reads VCASTDLRFS…SLSEIENKKF (598 aa). Ser223 (nucleophile) is an active-site residue. The interval 406-453 is disordered; sequence TSSSTMEEELEQIKPEHIVGDDSADNEEETQRGGTESADAEDERQRHA. Residues 416–425 show a composition bias toward basic and acidic residues; sequence EQIKPEHIVG. Residue Ser498 is modified to Phosphoserine; by MAPK. Asp540 (proton acceptor) is an active-site residue.

Post-translationally, activated by phosphorylation on a serine residue.

It localises to the cytoplasm. The protein resides in the cytoplasmic vesicle. The catalysed reaction is a 1,2-diacyl-sn-glycero-3-phosphocholine + H2O = a 1-acyl-sn-glycero-3-phosphocholine + a fatty acid + H(+). The enzyme catalyses a 1-acyl-sn-glycero-3-phosphocholine + H2O = sn-glycerol 3-phosphocholine + a fatty acid + H(+). Stimulated by agonists such as ATP, EGF, thrombin and bradykinin as well as by cytosolic Ca(2+). Selectively hydrolyzes arachidonyl phospholipids in the sn-2 position releasing arachidonic acid. Together with its lysophospholipid activity, it is implicated in the initiation of the inflammatory response. The chain is Cytosolic phospholipase A2 (pla2g4a) from Danio rerio (Zebrafish).